The following is a 204-amino-acid chain: Cytochrome c biogenesis ATP-binding export protein CcmA (204 aa).

One can recognise an ABC transporter domain in the interval 2–203; that stretch reads LEADNLECVR…PAGTVRELRL (202 aa). Position 34–41 (34–41) interacts with ATP; the sequence is GRNGAGKT.

The protein belongs to the ABC transporter superfamily. CcmA exporter (TC 3.A.1.107) family. In terms of assembly, the complex is composed of two ATP-binding proteins (CcmA) and two transmembrane proteins (CcmB).

Its subcellular location is the cell inner membrane. The enzyme catalyses heme b(in) + ATP + H2O = heme b(out) + ADP + phosphate + H(+). Its function is as follows. Part of the ABC transporter complex CcmAB involved in the biogenesis of c-type cytochromes; once thought to export heme, this seems not to be the case, but its exact role is uncertain. Responsible for energy coupling to the transport system. The chain is Cytochrome c biogenesis ATP-binding export protein CcmA from Dechloromonas aromatica (strain RCB).